The chain runs to 139 residues: Large-conductance mechanosensitive channel (139 aa).

Helical transmembrane passes span 9 to 29 (AFAVKGNVVDMAVGIIIGAAF) and 79 to 99 (IQSVIDFVIVAFAIFMGVKAI).

This sequence belongs to the MscL family. As to quaternary structure, homopentamer.

It localises to the cell inner membrane. Its function is as follows. Channel that opens in response to stretch forces in the membrane lipid bilayer. May participate in the regulation of osmotic pressure changes within the cell. The protein is Large-conductance mechanosensitive channel of Pseudomonas fluorescens (strain SBW25).